Here is a 617-residue protein sequence, read N- to C-terminus: uncharacterized protein (617 aa).

The chain crosses the membrane as a helical span at residues 10 to 30; sequence AFFFFFVSLILLFLSPSYSDV. A disordered region spans residues 34–58; it reads ESDPIPYENSDASPGVVTSSESDRQ. The span at 43 to 53 shows a compositional bias: polar residues; sequence SDASPGVVTSS. A coiled-coil region spans residues 60-86; that stretch reads VSLHRLEELVRNLTELVARLDAKLSET. Residues 473 to 493 traverse the membrane as a helical segment; the sequence is MLWSSPVFFFILFLFGAWHFF. The segment covering 511-529 has biased composition (low complexity); the sequence is STTMSSSSTTTAQNSSAFS. Residues 511–617 form a disordered region; it reads STTMSSSSTT…GNNKALDDES (107 aa). Positions 531–543 are enriched in basic and acidic residues; it reads STRRNDDHMDLRR. The span at 563-584 shows a compositional bias: polar residues; it reads VGSNDPSSRAPVETTNYRTTAQ. The span at 590–599 shows a compositional bias: gly residues; that stretch reads GGSGLDSGGF.

It localises to the membrane. This is an uncharacterized protein from Arabidopsis thaliana (Mouse-ear cress).